A 508-amino-acid polypeptide reads, in one-letter code: Probable monogalactosyldiacylglycerol synthase 3, chloroplastic (508 aa).

The N-terminal 60 residues, 1–60, are a transit peptide targeting the chloroplast; sequence MAASSSSSSSMASPRGRSIRETVLETVAAYHQQQRMRRKFRKSLSYAGELSSAGRARGEG. The disordered stretch occupies residues 51–79; sequence SSAGRARGEGGASSSASTTSLCGPDEDDE.

This sequence belongs to the glycosyltransferase 28 family.

Its subcellular location is the plastid. It is found in the chloroplast membrane. It carries out the reaction a 1,2-diacyl-sn-glycerol + UDP-alpha-D-galactose = a 1,2-diacyl-3-O-(beta-D-galactosyl)-sn-glycerol + UDP + H(+). Involved in the synthesis of the major structural component of photosynthetic membranes. The chain is Probable monogalactosyldiacylglycerol synthase 3, chloroplastic (MGD3) from Oryza sativa subsp. japonica (Rice).